The sequence spans 55 residues: Large ribosomal subunit protein bL33 (55 aa).

Belongs to the bacterial ribosomal protein bL33 family.

This Paenarthrobacter aurescens (strain TC1) protein is Large ribosomal subunit protein bL33.